Consider the following 120-residue polypeptide: UPF0231 protein YacL (120 aa).

This sequence belongs to the UPF0231 family.

The polypeptide is UPF0231 protein YacL (Escherichia coli O81 (strain ED1a)).